The sequence spans 122 residues: Large ribosomal subunit protein uL18 (122 aa).

This sequence belongs to the universal ribosomal protein uL18 family. In terms of assembly, part of the 50S ribosomal subunit; part of the 5S rRNA/L5/L18/L25 subcomplex. Contacts the 5S and 23S rRNAs.

Its function is as follows. This is one of the proteins that bind and probably mediate the attachment of the 5S RNA into the large ribosomal subunit, where it forms part of the central protuberance. This Prochlorococcus marinus (strain MIT 9301) protein is Large ribosomal subunit protein uL18.